The primary structure comprises 312 residues: Olfactory receptor-like protein COR5 (312 aa).

Topologically, residues 1–26 (MALGNCTTPTTFILSGLTDNPRLQMP) are extracellular. N-linked (GlcNAc...) asparagine glycosylation is present at Asn-5. A helical membrane pass occupies residues 27 to 49 (LFMVFLAIYTITLLANLGLIALI). Topologically, residues 50-57 (SVDFHLQT) are cytoplasmic. Residues 58 to 79 (PMYIFLQNLSFTDAAYSTVITP) form a helical membrane-spanning segment. The Extracellular segment spans residues 80–100 (KMLATFLEERRTISYVGCILQ). Cys-97 and Cys-179 form a disulfide bridge. A helical membrane pass occupies residues 101-120 (YFSFVLLTSSECLLLAVMAY). At 121 to 139 (DRYVAICKPLLYPAIMTKA) the chain is on the cytoplasmic side. The chain crosses the membrane as a helical span at residues 140-164 (VCWRLVEGLYSLAFLNSLVHTSGLL). Topologically, residues 165–205 (KLSFCSSNVVNHFFCDNSPLFQISSSSTTLNELLVFIFGSW) are extracellular. The chain crosses the membrane as a helical span at residues 206 to 226 (FAMSSIITTPISYVFIILTVV). Residues 227-239 (RIRSKDGKYKAFS) lie on the Cytoplasmic side of the membrane. The helical transmembrane segment at 240-260 (TCTSHLMAVSLFHGTVIFMYL) threads the bilayer. Residues 261–271 (RPVKLFSLDTD) lie on the Extracellular side of the membrane. Residues 272–292 (KIASLFYTVVIPMLNPLIYSW) form a helical membrane-spanning segment. Residues 293–312 (RNKEVKDALRRVIATNVWIH) are Cytoplasmic-facing.

It belongs to the G-protein coupled receptor 1 family.

The protein localises to the cell membrane. Its function is as follows. Odorant receptor. This chain is Olfactory receptor-like protein COR5 (COR5), found in Gallus gallus (Chicken).